Consider the following 406-residue polypeptide: Anthranilate 1,2-dioxygenase system ferredoxin--NAD(+) reductase component (406 aa).

5–37 provides a ligand contact to FAD; the sequence is PFVIVGAGHAARRTAEALRARDADAPIVMIGAE. 152–161 provides a ligand contact to NAD(+); it reads GGGFIGLEVA.

The protein belongs to the FAD-dependent oxidoreductase family. Part of a multicomponent enzyme system composed of a reductase (AndAa), a ferredoxin (AndAb) and a two-subunit oxygenase component (AndAc and AndAd). FAD is required as a cofactor.

It catalyses the reaction 2 reduced [2Fe-2S]-[ferredoxin] + NAD(+) + H(+) = 2 oxidized [2Fe-2S]-[ferredoxin] + NADH. The protein operates within aromatic compound metabolism; anthranilate degradation via hydroxylation; catechol from anthranilate: step 1/1. Its function is as follows. Part of the multicomponent anthranilate dioxygenase, that converts anthranilate to catechol. Probably transfers electrons from ferredoxin (AndAb) to NADH. This Burkholderia cepacia (Pseudomonas cepacia) protein is Anthranilate 1,2-dioxygenase system ferredoxin--NAD(+) reductase component.